The following is a 94-amino-acid chain: MKESNSNSVKEDVEGIKKDIESLVSRLRNLKGKTGDILDEQLGNLSSVMEHYKDKGIEKGKANLADLCESTRNNPLRNLAYAFGAGVLLAILMK.

This is an uncharacterized protein from Rickettsia prowazekii (strain Madrid E).